Reading from the N-terminus, the 472-residue chain is MSLSRRQFIQASGIALCAGAMPLTARADGGKNPLPVPPLLESRRGQPVFLTMQRAHWSFSGERKNPVWGFNGRYLGPTVRVFSNDDVKLIYSNRLNEPVSMTVSGLQVPGSLMGGAGRMIQPNMDWSPVLPVRQAAATCWYHANTPNRMAPHVYNGLAGLWLVEDSLSKSLPIPNHYGVDDFPLIIQDKRLDNFGAPLYNPPSSGGFMGDTLLVNGARNPYVEVSRGWVRLRLLNASNARRYVMRMSDGRPLHLIANDQGFLPAPMALNQMSLAPGERREVLVDMSQGNEATLTAGESASIMQRLRGLFEPSNILVSSAILTLRPTGLLPLVTNTLPMRLLADNIIDGAVSRTREFRLGDSLPGINGAMWDVNRVDVQTQVGRYERWIVHADQPQPFHVQGAAFLVRSVNGGLTPPEDSGWKDTVWVENDVELLVYFGQFSTPQFPFLYYSHTLEMADRGSIAQLVAQASNG.

A signal peptide (tat-type signal) is located at residues 1–27; sequence MSLSRRQFIQASGIALCAGAMPLTARA.

This sequence belongs to the FtsP family. In terms of processing, predicted to be exported by the Tat system. The position of the signal peptide cleavage has not been experimentally proven.

The protein resides in the periplasm. In terms of biological role, cell division protein that is required for growth during stress conditions. May be involved in protecting or stabilizing the divisomal assembly under conditions of stress. The chain is Cell division protein FtsP from Dickeya dadantii (strain 3937) (Erwinia chrysanthemi (strain 3937)).